Here is a 300-residue protein sequence, read N- to C-terminus: Inositol polyphosphate multikinase beta (300 aa).

Ser-78 carries the post-translational modification Phosphoserine.

It belongs to the inositol phosphokinase (IPK) family. Interacts with KIN10 and KIN11. In terms of processing, phosphorylated by KIN10. Expressed in leaves, stems, roots, siliques and flowers. Detected in vascular strands, stigma cells, the abscission zones of fully elongated siliques, the root central cylinder and the root tip.

It is found in the nucleus. It catalyses the reaction 1D-myo-inositol 1,4,5-trisphosphate + 2 ATP = 1D-myo-inositol 1,3,4,5,6-pentakisphosphate + 2 ADP + 2 H(+). The catalysed reaction is 1D-myo-inositol 1,3,4,6-tetrakisphosphate + ATP = 1D-myo-inositol 1,3,4,5,6-pentakisphosphate + ADP + H(+). Down-regulated by KIN10 through its protein phosphorylation. Functionally, inositol phosphate kinase with a broad substrate specificity. Phosphorylates inositol 1,4,5-trisphosphate (Ins(1,4,5)P3), inositol 1,4,5,6-tetrakisphosphate (Ins(1,4,5,6)P4), inositol 1,3,4,5-tetrakisphosphate (Ins(1,3,4,5)P4), inositol 1,3,4,6-tetrakisphosphate (Ins(1,3,4,6)P4) and inositol 1,2,3,4,6-pentakisphosphate (Ins(1,2,3,4,6)P5) but not inositol 1,4-bisphosphate (Ins(1,4)P2), inositol 1,3,4-trisphosphate (Ins(1,3,4)P3), inositol 1,2,6-trisphosphate (Ins(1,2,6)P3), inositol 3,4,5,6-tetrakisphosphate (Ins(3,4,5,6)P4), inositol 1,3,4,5,6-pentakisphosphate (Ins(1,3,4,5,6)P5), inositol 1,2,4,5,6-pentakisphosphate (Ins(1,2,4,5,6)P5) or inositol hexakisphosphate (InsP6). Involved in the auxin signaling pathway. Regulates axillary shoot branching and is required for phytate synthesis in seeds. The chain is Inositol polyphosphate multikinase beta (IPK2b) from Arabidopsis thaliana (Mouse-ear cress).